Here is a 1108-residue protein sequence, read N- to C-terminus: TBC1 domain family member 8B (1108 aa).

GRAM domains are found at residues 143–210 and 283–351; these read LRFE…ERTS and QSFR…ELPD. Positions 469-656 constitute a Rab-GAP TBC domain; it reads GVPETLRGEL…NVVDCFFYDG (188 aa). The EF-hand domain maps to 822–857; the sequence is HSRSLARSAFHLLDENGDGLVNFKEFICGLDILYNR. Residues D835, N837, D839, and E846 each coordinate Ca(2+). A disordered region spans residues 961–1059; it reads GRKLQDSSPQ…PTDTPSSPCT (99 aa). A compositionally biased stretch (low complexity) spans 967-998; it reads SSPQKTPQTTPTSTSQPESSPTKPTSPESETP. The segment covering 1010–1024 has biased composition (polar residues); sequence SPVSQHETAPSHSDI. Over residues 1025–1057 the composition is skewed to low complexity; that stretch reads TPNSTSHPSTPTSSPTETSSPVLDTPTDTPSSP.

Its subcellular location is the cytoplasm. The protein resides in the cytosol. Its function is as follows. Involved in vesicular recycling, probably as a GTPase-activating protein for Rab family protein(s). The polypeptide is TBC1 domain family member 8B (tbc1d8b) (Danio rerio (Zebrafish)).